A 492-amino-acid chain; its full sequence is Catalase-4 (492 aa).

Catalysis depends on residues H65 and N138. Heme is bound at residue Y348.

The protein belongs to the catalase family. In terms of assembly, homotetramer. Heme is required as a cofactor.

The protein localises to the peroxisome. It localises to the glyoxysome. It catalyses the reaction 2 H2O2 = O2 + 2 H2O. Functionally, occurs in almost all aerobically respiring organisms and serves to protect cells from the toxic effects of hydrogen peroxide. This chain is Catalase-4 (CAT4), found in Glycine max (Soybean).